A 245-amino-acid polypeptide reads, in one-letter code: Uridylate kinase (245 aa).

20 to 23 (KVSG) is an ATP binding site. Gly62 provides a ligand contact to UMP. ATP is bound by residues Gly63 and Arg67. Residues Asp81 and 142 to 149 (IGSPFFTT) contribute to the UMP site. The ATP site is built by Thr169, Gln170, Tyr175, and Asp178.

Belongs to the UMP kinase family. In terms of assembly, homohexamer.

It is found in the cytoplasm. It catalyses the reaction UMP + ATP = UDP + ADP. Its pathway is pyrimidine metabolism; CTP biosynthesis via de novo pathway; UDP from UMP (UMPK route): step 1/1. Its activity is regulated as follows. Inhibited by UTP. Catalyzes the reversible phosphorylation of UMP to UDP. The chain is Uridylate kinase from Anaplasma marginale (strain St. Maries).